The primary structure comprises 51 residues: Cytochrome bd ubiquinol oxidase subunit X (51 aa).

The Cytoplasmic portion of the chain corresponds to 1 to 3 (MWY). Residues 4–26 (FSWLLGLPLAAAFAVLNAMWYEL) traverse the membrane as a helical segment. Topologically, residues 27–51 (MDDRARKRLAADPTAELALEGNKHH) are periplasmic.

The protein belongs to the cytochrome ubiquinol oxidase subunit X family. As to quaternary structure, may be a subunit of cytochrome ubiquinol oxidase.

The protein resides in the cell inner membrane. It carries out the reaction 2 a ubiquinol + O2(in) + 4 H(+)(in) = 2 a ubiquinone + 2 H2O(in) + 4 H(+)(out). It functions in the pathway energy metabolism; oxidative phosphorylation. Its function is as follows. Required for correct functioning of cytochrome bd oxidase. In Brucella abortus (strain 2308), this protein is Cytochrome bd ubiquinol oxidase subunit X (cydX).